We begin with the raw amino-acid sequence, 102 residues long: Small ribosomal subunit protein uS10 (102 aa).

The protein belongs to the universal ribosomal protein uS10 family. As to quaternary structure, part of the 30S ribosomal subunit.

Its function is as follows. Involved in the binding of tRNA to the ribosomes. The polypeptide is Small ribosomal subunit protein uS10 (Clostridium kluyveri (strain NBRC 12016)).